Reading from the N-terminus, the 356-residue chain is Histidinol-phosphate aminotransferase (356 aa).

The residue at position 214 (K214) is an N6-(pyridoxal phosphate)lysine.

Belongs to the class-II pyridoxal-phosphate-dependent aminotransferase family. Histidinol-phosphate aminotransferase subfamily. Homodimer. Pyridoxal 5'-phosphate serves as cofactor.

The enzyme catalyses L-histidinol phosphate + 2-oxoglutarate = 3-(imidazol-4-yl)-2-oxopropyl phosphate + L-glutamate. It functions in the pathway amino-acid biosynthesis; L-histidine biosynthesis; L-histidine from 5-phospho-alpha-D-ribose 1-diphosphate: step 7/9. In Escherichia coli O7:K1 (strain IAI39 / ExPEC), this protein is Histidinol-phosphate aminotransferase.